We begin with the raw amino-acid sequence, 229 residues long: Uracil-DNA glycosylase (229 aa).

The Proton acceptor role is filled by Asp-67.

It belongs to the uracil-DNA glycosylase (UDG) superfamily. UNG family.

It localises to the cytoplasm. The enzyme catalyses Hydrolyzes single-stranded DNA or mismatched double-stranded DNA and polynucleotides, releasing free uracil.. In terms of biological role, excises uracil residues from the DNA which can arise as a result of misincorporation of dUMP residues by DNA polymerase or due to deamination of cytosine. The protein is Uracil-DNA glycosylase of Coxiella burnetii (strain RSA 493 / Nine Mile phase I).